Reading from the N-terminus, the 196-residue chain is dITP/XTP pyrophosphatase (196 aa).

10 to 15 (TTNPHK) contributes to the substrate binding site. The Proton acceptor role is filled by aspartate 68. Aspartate 68 serves as a coordination point for Mg(2+). Substrate-binding positions include serine 69, 148–151 (FGYD), and 175–176 (HR).

It belongs to the HAM1 NTPase family. Homodimer. It depends on Mg(2+) as a cofactor.

The enzyme catalyses XTP + H2O = XMP + diphosphate + H(+). The catalysed reaction is dITP + H2O = dIMP + diphosphate + H(+). It carries out the reaction ITP + H2O = IMP + diphosphate + H(+). In terms of biological role, pyrophosphatase that catalyzes the hydrolysis of nucleoside triphosphates to their monophosphate derivatives, with a high preference for the non-canonical purine nucleotides XTP (xanthosine triphosphate), dITP (deoxyinosine triphosphate) and ITP. Seems to function as a house-cleaning enzyme that removes non-canonical purine nucleotides from the nucleotide pool, thus preventing their incorporation into DNA/RNA and avoiding chromosomal lesions. This chain is dITP/XTP pyrophosphatase, found in Thermotoga maritima (strain ATCC 43589 / DSM 3109 / JCM 10099 / NBRC 100826 / MSB8).